A 226-amino-acid polypeptide reads, in one-letter code: Transcription repressor OFP12 (226 aa).

Low complexity predominate over residues Ser68–Ser87. The segment at Ser68–Pro104 is disordered. One can recognise an OVATE domain in the interval Val152 to Ser217.

In terms of assembly, interacts with KNAT1, KNAT2, KNAT3 and KNAT4. In terms of tissue distribution, expressed in roots, shoots, stems, flower buds and siliques.

The protein localises to the nucleus. Its function is as follows. Transcriptional repressor that regulates multiple aspects of plant growth and development through the regulation of BEL1-LIKE (BLH) and KNOX TALE (KNAT) homeodomain transcription factors. The protein is Transcription repressor OFP12 (OFP12) of Arabidopsis thaliana (Mouse-ear cress).